The chain runs to 201 residues: MQEFTKLTGVAAPMPLVNIDTDMIIPKQFLKTIQRSGLGKNLFDEMRYNPDGSEIPEFVLNQPAYRDAQIIVAGDNFGCGSSREHAPWALLDFGIRCVISTSFADIFYNNCFKNGILPIVMPPEVVEVLMEDARRGANARMTVDLEAQTVTTSDGQSFPFQVDSFRRHCLMNGLDDIGLTLEKAASIDGFERDLATLRPWV.

Belongs to the LeuD family. LeuD type 1 subfamily. As to quaternary structure, heterodimer of LeuC and LeuD.

The catalysed reaction is (2R,3S)-3-isopropylmalate = (2S)-2-isopropylmalate. It functions in the pathway amino-acid biosynthesis; L-leucine biosynthesis; L-leucine from 3-methyl-2-oxobutanoate: step 2/4. In terms of biological role, catalyzes the isomerization between 2-isopropylmalate and 3-isopropylmalate, via the formation of 2-isopropylmaleate. This chain is 3-isopropylmalate dehydratase small subunit, found in Cereibacter sphaeroides (strain KD131 / KCTC 12085) (Rhodobacter sphaeroides).